A 497-amino-acid chain; its full sequence is Succinate-semialdehyde dehydrogenase [NADP(+)] (497 aa).

The Proton acceptor role is filled by Glu-264. Cys-298 functions as the Nucleophile in the catalytic mechanism.

It belongs to the aldehyde dehydrogenase family. As to quaternary structure, homotetramer.

Its subcellular location is the cytoplasm. The catalysed reaction is succinate semialdehyde + NAD(+) + H2O = succinate + NADH + 2 H(+). It catalyses the reaction succinate semialdehyde + NADP(+) + H2O = succinate + NADPH + 2 H(+). It functions in the pathway amino-acid degradation; 4-aminobutanoate degradation. Inhibited by AMP, ADP anf ATP. Catalyzes the oxidation of succinate semialdehyde to succinate. Can utilize both NAD(+) or NADP(+) as a coenzyme, but has a 2.5-fold lower activity with NADP(+) than with NAD(+). Functions in a gamma-aminobutyrate (GABA) degradation pathway that allows growth utilizing GABA as a nitrogen source. Functions in the GABA shunt, which allows to bypass 2 reactions in the TCA cycle by removing alpha-ketoglutarate from the cycle and feeding succinate and NADH back into the cycle. This Saccharomyces cerevisiae (strain ATCC 204508 / S288c) (Baker's yeast) protein is Succinate-semialdehyde dehydrogenase [NADP(+)].